The primary structure comprises 180 residues: MSRVGKLPVAIPNGVTVTVTPDNVVTVKGPKGELVKAMSNKINIAVEDNSVVVTRDNDHKDVRALHGLTRALINNMVTGVNEGYIKTLELIGVGYRAQLQGKKLVLSLGFSHPVEMEAVSGVEFEVEGGTKVKVKGIDKELVGAVAADIRKWRKPEPYKGKGIKYENEVIRRKEGKTGKK.

Belongs to the universal ribosomal protein uL6 family. Part of the 50S ribosomal subunit.

Functionally, this protein binds to the 23S rRNA, and is important in its secondary structure. It is located near the subunit interface in the base of the L7/L12 stalk, and near the tRNA binding site of the peptidyltransferase center. The protein is Large ribosomal subunit protein uL6 of Clostridium botulinum (strain 657 / Type Ba4).